The primary structure comprises 609 residues: Beta-(1--&gt;2)glucan export ATP-binding/permease protein NdvA (609 aa).

An ABC transmembrane type-1 domain is found at Gly21–Met311. 6 helical membrane-spanning segments follow: residues Trp22–Phe42, Leu68–Leu88, Glu146–Trp166, Arg167–Val187, Trp248–Phe268, and Ile285–Phe305. In terms of domain architecture, ABC transporter spans Val345–Ala579. ATP is bound at residue Gly378–Ser385.

Belongs to the ABC transporter superfamily. Beta-(1--&gt;2)glucan exporter (TC 3.A.1.108.1) family. In terms of assembly, homodimer.

It is found in the cell inner membrane. It carries out the reaction [(1-&gt;2)-beta-D-glucosyl](n)(in) + ATP + H2O = [(1-&gt;2)-beta-D-glucosyl](n)(out) + ADP + phosphate + H(+). Involved in beta-(1--&gt;2)glucan export. Transmembrane domains (TMD) form a pore in the inner membrane and the ATP-binding domain (NBD) is responsible for energy generation. This Nitrobacter winogradskyi (strain ATCC 25391 / DSM 10237 / CIP 104748 / NCIMB 11846 / Nb-255) protein is Beta-(1--&gt;2)glucan export ATP-binding/permease protein NdvA.